We begin with the raw amino-acid sequence, 130 residues long: Guanyl-specific ribonuclease T1 (130 aa).

Residues 1–26 form the signal peptide; sequence MMYSKLLTLTTLLLPTALALPSLVER. Cystine bridges form between Cys-28-Cys-36 and Cys-32-Cys-129. His-66 is an active-site residue. The Proton acceptor role is filled by Glu-84. His-118 serves as the catalytic Proton donor.

It belongs to the ribonuclease N1/T1 family. In terms of assembly, monomer.

It catalyses the reaction [RNA] containing guanosine + H2O = an [RNA fragment]-3'-guanosine-3'-phosphate + a 5'-hydroxy-ribonucleotide-3'-[RNA fragment].. The chain is Guanyl-specific ribonuclease T1 (rntA) from Aspergillus oryzae (strain ATCC 42149 / RIB 40) (Yellow koji mold).